We begin with the raw amino-acid sequence, 276 residues long: RRP15-like protein (276 aa).

Disordered stretches follow at residues 1 to 132 (MALL…QLRV) and 201 to 276 (KRAK…DGEE). 2 stretches are compositionally biased toward basic and acidic residues: residues 75 to 95 (FQKDAANKKPGFDFEIEKADV) and 226 to 245 (KGSSGKKKSEWSVLREDFMT). Acidic residues predominate over residues 254–276 (EEDDDEEGHNDEADDSDYDDGEE). Position 269 is a phosphoserine (Ser269). Phosphotyrosine is present on Tyr271.

The protein belongs to the RRP15 family.

This chain is RRP15-like protein, found in Drosophila melanogaster (Fruit fly).